The primary structure comprises 885 residues: Conidiophore development regulator abaA (885 aa).

Residues 1–20 are compositionally biased toward polar residues; it reads MSSLFQPRPVLSSQRYSQSP. The segment at 1–25 is disordered; it reads MSSLFQPRPVLSSQRYSQSPDYVDT. Residues 124–217 constitute a DNA-binding region (TEA); sequence QKDKGGVWRR…QVVKKFFEDL (94 aa). 2 disordered regions span residues 502-539 and 817-885; these read KEKR…WTRR and APGS…TAGW. 2 stretches are compositionally biased toward basic and acidic residues: residues 508 to 521 and 831 to 840; these read YADG…ERAG and VESHAGDHHG.

This sequence belongs to the TEC1 family.

The protein localises to the nucleus. Its function is as follows. BrlA, abaA and wetA are pivotal regulators of conidiophore development and conidium maturation. They act individually and together to regulate their own expression and that of numerous other sporulation-specific genes. BrlA, abaA and wetA act together to positively regulate the expression of the Pks1 gene cluster that mediates the biosynthesis of an anthraquinone derivative pigment that contributes to conidial pigmentation that provides protection from UV radiation, heat and cold stress. The chain is Conidiophore development regulator abaA from Metarhizium robertsii (strain ARSEF 23 / ATCC MYA-3075) (Metarhizium anisopliae (strain ARSEF 23)).